The sequence spans 75 residues: Conotoxin Vt15.1 (75 aa).

The signal sequence occupies residues 1–19; that stretch reads MMPVILPLLLSLAIRGGDG. Positions 20-43 are excised as a propeptide; that stretch reads QAIQGDRDLIAKLFKRYQEHGLSV. W73 is modified (tryptophan amide).

This sequence belongs to the conotoxin V superfamily. In terms of processing, contains 4 disulfide bonds. As to expression, expressed by the venom duct.

Its subcellular location is the secreted. This is Conotoxin Vt15.1 from Conus planorbis (Planorbis cone).